Here is a 949-residue protein sequence, read N- to C-terminus: Collagen alpha-2(I) chain (949 aa).

Positions 1–949 (SGGFDFSFLP…FGYEGDFYRA (949 aa)) are disordered. A 4-hydroxyproline mark is found at Pro-10, Pro-13, Pro-34, and Pro-40. Positions 27-66 (LMGPRGPPGASGAPGPQGFQGPAGEPGEPGQTGPAGARGP) are enriched in low complexity. Lys-95 bears the 5-hydroxylysine; alternate mark. Lys-95 is a glycosylation site (O-linked (Gal...) hydroxylysine; alternate). Low complexity-rich tracts occupy residues 147-162 (SVGP…SAGP) and 208-229 (PGAN…AGAP). The span at 263–272 (GESGGKGEPG) shows a compositional bias: gly residues. The segment covering 273–283 (SAGPQGPPGSS) has biased composition (low complexity). A compositionally biased stretch (gly residues) spans 292-313 (NGEGSTGPTGPPGLRGGPGSRG). Residues Pro-348 and Pro-351 each carry the 4-hydroxyproline modification. Residues 377–396 (LPGIDGRPGPIGPAGARGEA) show a composition bias toward low complexity. Over residues 435-444 (GVQGGKGEQG) the composition is skewed to gly residues. 2 stretches are compositionally biased toward low complexity: residues 490–507 (PGES…SRGP) and 519–529 (EPGVVGAPGTA). The span at 530–539 (GPAGSGGLPG) shows a compositional bias: gly residues. Composition is skewed to low complexity over residues 562 to 606 (VGTT…PRGS) and 613 to 633 (VGPA…QPGA). The segment covering 634-643 (KGERGTKGPK) has biased composition (basic and acidic residues). Low complexity predominate over residues 651 to 661 (PTGPVGSAGPA). The segment covering 671–680 (GSRGDGGPPG) has biased composition (gly residues). Over residues 682-691 (TGFPGAAGRT) the composition is skewed to low complexity. The span at 722-736 (GPVGRGETGAGGPPG) shows a compositional bias: gly residues. Composition is skewed to low complexity over residues 737–771 (FTGE…LGLP), 779–792 (LPGV…PGPL), and 810–825 (EPGP…ALGP). Over residues 835 to 846 (RGDKGEPGEKGP) the composition is skewed to basic and acidic residues. A compositionally biased stretch (pro residues) spans 921 to 931 (PAGPPGPPGPP).

Belongs to the fibrillar collagen family. Trimers of one alpha 2(I) and two alpha 1(I) chains. Interacts (via C-terminus) with TMEM131 (via PapD-L domain); the interaction is direct and is involved in assembly and TRAPPIII ER-to-Golgi transport complex-dependent secretion of collagen. Post-translationally, prolines at the third position of the tripeptide repeating unit (G-X-Y) are hydroxylated in some or all of the chains. Expressed in bones.

The protein resides in the secreted. Its subcellular location is the extracellular space. The protein localises to the extracellular matrix. Its function is as follows. Type I collagen is a member of group I collagen (fibrillar forming collagen). The sequence is that of Collagen alpha-2(I) chain from Acratocnus ye (Hispaniolan ground sloth).